Consider the following 190-residue polypeptide: uncharacterized protein (190 aa).

It belongs to the Iojap/RsfS family.

This is an uncharacterized protein from Caenorhabditis elegans.